The following is a 157-amino-acid chain: Protein Smg (157 aa).

The protein belongs to the Smg family.

In Buchnera aphidicola subsp. Acyrthosiphon pisum (strain 5A), this protein is Protein Smg.